Here is a 142-residue protein sequence, read N- to C-terminus: Hemoglobin subunit alpha (142 aa).

One can recognise a Globin domain in the interval 2 to 142 (VLSATDKSNV…VSTVLTSKYR (141 aa)). Serine 4 bears the Phosphoserine mark. Residues lysine 8 and lysine 12 each carry the N6-succinyllysine modification. The residue at position 17 (lysine 17) is an N6-acetyllysine; alternate. Lysine 17 is modified (N6-succinyllysine; alternate). Tyrosine 25 carries the post-translational modification Phosphotyrosine. Residue serine 36 is modified to Phosphoserine. An N6-succinyllysine modification is found at lysine 41. Phosphoserine is present on serine 50. Histidine 59 lines the O2 pocket. Position 88 (histidine 88) interacts with heme b. Position 103 is a phosphoserine (serine 103). A Phosphothreonine modification is found at threonine 109. Phosphoserine is present on serine 125. Phosphothreonine occurs at positions 135 and 138. At serine 139 the chain carries Phosphoserine.

This sequence belongs to the globin family. In terms of assembly, heterotetramer of two alpha chains and two beta chains. Red blood cells.

Involved in oxygen transport from the lung to the various peripheral tissues. Its function is as follows. Hemopressin acts as an antagonist peptide of the cannabinoid receptor CNR1. Hemopressin-binding efficiently blocks cannabinoid receptor CNR1 and subsequent signaling. This chain is Hemoglobin subunit alpha (HBA), found in Alces alces alces (European moose).